Reading from the N-terminus, the 213-residue chain is Gas vesicle protein F (213 aa).

It belongs to the gas vesicle GvpF/GvpL family. In terms of assembly, binds GvpA.

Its subcellular location is the gas vesicle. In terms of biological role, a minor component of the gas vesicle, may be involved in preventing GvpA aggregation during gas vesicle nucleation. Gas vesicles are hollow, gas filled proteinaceous nanostructures found in some microorganisms. They allow positioning of halobacteria at the optimal depth for growth in the poorly aerated, shallow brine pools of their habitat. Its function is as follows. Expression of a 9.5 kb mc-vac DNA fragment containing 2 divergently transcribed regions (gvpD-gvpE-gvpF-gvpG-gvpH-gvpI-gvpJ-gvpK-gvpL-gvpM and gvpA-gvpC-gvpN-gvpO) allows H.volcanii to produce gas vesicles. The polypeptide is Gas vesicle protein F (Haloferax mediterranei (strain ATCC 33500 / DSM 1411 / JCM 8866 / NBRC 14739 / NCIMB 2177 / R-4) (Halobacterium mediterranei)).